Reading from the N-terminus, the 354-residue chain is Probable cinnamyl alcohol dehydrogenase 1 (354 aa).

C47 is a binding site for Zn(2+). Position 49 (S49) interacts with NADP(+). The Zn(2+) site is built by H69, E70, C100, C103, C106, C114, and C163. NADP(+) contacts are provided by residues T167, 188-193 (GLGGVG), 211-216 (SSSDKK), T251, G275, and 296-298 (SFI).

It belongs to the zinc-containing alcohol dehydrogenase family. Homodimer. Zn(2+) serves as cofactor.

The enzyme catalyses (E)-cinnamyl alcohol + NADP(+) = (E)-cinnamaldehyde + NADPH + H(+). The catalysed reaction is (E)-coniferol + NADP(+) = (E)-coniferaldehyde + NADPH + H(+). It catalyses the reaction (E)-sinapyl alcohol + NADP(+) = (E)-sinapaldehyde + NADPH + H(+). It carries out the reaction (E)-4-coumaroyl alcohol + NADP(+) = (E)-4-coumaraldehyde + NADPH + H(+). The enzyme catalyses (E)-caffeyl alcohol + NADP(+) = (E)-caffeyl aldehyde + NADPH + H(+). It participates in aromatic compound metabolism; phenylpropanoid biosynthesis. In terms of biological role, involved in lignin biosynthesis. Catalyzes the final step specific for the production of lignin monomers. Catalyzes the NADPH-dependent reduction of coniferaldehyde, 5-hydroxyconiferaldehyde, sinapaldehyde, 4-coumaraldehyde and caffeyl aldehyde to their respective alcohols. This chain is Probable cinnamyl alcohol dehydrogenase 1 (CAD1), found in Eucalyptus gunnii (Cider gum).